The primary structure comprises 427 residues: Anhydro-N-acetylmuramic acid kinase (427 aa).

An ATP-binding site is contributed by 32 to 39; that stretch reads GTSLDGMD.

The protein belongs to the anhydro-N-acetylmuramic acid kinase family.

The enzyme catalyses 1,6-anhydro-N-acetyl-beta-muramate + ATP + H2O = N-acetyl-D-muramate 6-phosphate + ADP + H(+). The protein operates within amino-sugar metabolism; 1,6-anhydro-N-acetylmuramate degradation. It functions in the pathway cell wall biogenesis; peptidoglycan recycling. Its function is as follows. Catalyzes the specific phosphorylation of 1,6-anhydro-N-acetylmuramic acid (anhMurNAc) with the simultaneous cleavage of the 1,6-anhydro ring, generating MurNAc-6-P. Is required for the utilization of anhMurNAc either imported from the medium or derived from its own cell wall murein, and thus plays a role in cell wall recycling. The protein is Anhydro-N-acetylmuramic acid kinase of Psychrobacter cryohalolentis (strain ATCC BAA-1226 / DSM 17306 / VKM B-2378 / K5).